Here is a 147-residue protein sequence, read N- to C-terminus: VHWEDAEKQYIVSVFSKIDVDHVGANTLERVLIVFPWTKRYFNSFGDLSSPGAIKHNNKVSAHGRKVLAAIIECTRHFGNIKGHLANLSHLHSEKLHVDPHNFRVLGQCLRIELAAALGFKEFTPERNAYFQKFMDVISHSLGREYH.

The region spanning 2–147 is the Globin domain; the sequence is HWEDAEKQYI…ISHSLGREYH (146 aa). Heme b-binding residues include histidine 63 and histidine 92.

Belongs to the globin family. As to quaternary structure, heterotetramer of two alpha chains and two beta chains. As to expression, red blood cells.

Functionally, involved in oxygen transport from the lung to the various peripheral tissues. The sequence is that of Hemoglobin subunit beta (HBB) from Lepidosiren paradoxus (South American lungfish).